Consider the following 112-residue polypeptide: UPF0122 protein CPE1714 (112 aa).

The protein belongs to the UPF0122 family.

Its function is as follows. Might take part in the signal recognition particle (SRP) pathway. This is inferred from the conservation of its genetic proximity to ftsY/ffh. May be a regulatory protein. This chain is UPF0122 protein CPE1714, found in Clostridium perfringens (strain 13 / Type A).